The primary structure comprises 234 residues: 2,3,4,5-tetrahydropyridine-2,6-dicarboxylate N-acetyltransferase (234 aa).

It belongs to the transferase hexapeptide repeat family. DapH subfamily.

The enzyme catalyses (S)-2,3,4,5-tetrahydrodipicolinate + acetyl-CoA + H2O = L-2-acetamido-6-oxoheptanedioate + CoA. Its pathway is amino-acid biosynthesis; L-lysine biosynthesis via DAP pathway; LL-2,6-diaminopimelate from (S)-tetrahydrodipicolinate (acetylase route): step 1/3. Functionally, catalyzes the transfer of an acetyl group from acetyl-CoA to tetrahydrodipicolinate. This is 2,3,4,5-tetrahydropyridine-2,6-dicarboxylate N-acetyltransferase from Ligilactobacillus salivarius (strain UCC118) (Lactobacillus salivarius).